Reading from the N-terminus, the 1041-residue chain is RAS protein activator like-3 (1041 aa).

Residues 1-59 form a disordered region; sequence MKPECGQTMFRTFWSRSRDSSAMDPPLQSEEDSQTQPSLPSPLTSYRWHTGGSGEKAAG. Polar residues predominate over residues 34-44; that stretch reads QTQPSLPSPLT. A phosphoserine mark is found at Ser41, Ser74, Ser187, Ser189, Ser190, Ser193, Ser239, Ser252, Ser256, and Ser259. Positions 218–243 form a coiled coil; it reads SNQVHNVRKLLKRLKEKKRAKSELGA. Residues 220 to 321 enclose the PH domain; it reads QVHNVRKLLK…WIEDLRRQFQ (102 aa). The disordered stretch occupies residues 234-256; sequence KKRAKSELGAYTPRDGPPSALGS. Position 262 is a phosphothreonine (Thr262). Residues 312–430 form the C2 domain; the sequence is WIEDLRRQFQ…APAAGLERWF (119 aa). Positions 500–708 constitute a Ras-GAP domain; the sequence is GRAQALVTDL…PAMQHFLDQV (209 aa). A disordered region spans residues 790–910; that stretch reads GEKPGFLAPR…PGDRYQTTGT (121 aa). Ser813 and Ser816 each carry phosphoserine. Residues 850–866 are compositionally biased toward basic residues; that stretch reads RPTHRRPSAGSKPRPKG. Positions 931–1013 form a coiled coil; that stretch reads QKALSLLVES…LRDSLQSLQL (83 aa). Positions 1016–1041 are disordered; it reads KTPGSRSQPLPLKAPCVNGADLSMGT.

In terms of tissue distribution, predominantly expressed in hematopoietic tissues.

It localises to the cytoplasm. It is found in the cell cortex. Its function is as follows. Functions as a Ras GTPase-activating protein. Plays an important role in the expansion and functions of natural killer T (NKT) cells in the liver by negatively regulating RAS activity and the down-stream ERK signaling pathway. This Mus musculus (Mouse) protein is RAS protein activator like-3 (Rasal3).